The sequence spans 293 residues: 4-hydroxy-tetrahydrodipicolinate synthase (293 aa).

Pyruvate is bound at residue Thr45. The active-site Proton donor/acceptor is the Tyr133. Catalysis depends on Lys161, which acts as the Schiff-base intermediate with substrate. Residue Ile203 coordinates pyruvate.

It belongs to the DapA family. Homotetramer; dimer of dimers.

Its subcellular location is the cytoplasm. It catalyses the reaction L-aspartate 4-semialdehyde + pyruvate = (2S,4S)-4-hydroxy-2,3,4,5-tetrahydrodipicolinate + H2O + H(+). The protein operates within amino-acid biosynthesis; L-lysine biosynthesis via DAP pathway; (S)-tetrahydrodipicolinate from L-aspartate: step 3/4. In terms of biological role, catalyzes the condensation of (S)-aspartate-beta-semialdehyde [(S)-ASA] and pyruvate to 4-hydroxy-tetrahydrodipicolinate (HTPA). The protein is 4-hydroxy-tetrahydrodipicolinate synthase of Aliivibrio fischeri (strain ATCC 700601 / ES114) (Vibrio fischeri).